The chain runs to 315 residues: Protoheme IX farnesyltransferase (315 aa).

Helical transmembrane passes span 32–52 (VMSLVVFTGLVGLVLAPGHMN), 53–73 (PVLAVISILCIAVGAGASGAL), 93–113 (IPAGIIAPNQVLAFGLTLSAF), 120–140 (LMVNWLAAALLAFTIFFYAVI), 153–173 (IVIGGAAGAFPPMIGWAAATG), 180–200 (LVLFMIIFLWTPPHFWALSLF), 226–246 (ALFYAVLMAPVGVLPWVMGFA), 249–269 (FYGVVSTLLGLAFVYYAWRLW), and 295–315 (IFAVLLFEALTFKLLAAFGVF).

It belongs to the UbiA prenyltransferase family. Protoheme IX farnesyltransferase subfamily.

It localises to the cell inner membrane. It carries out the reaction heme b + (2E,6E)-farnesyl diphosphate + H2O = Fe(II)-heme o + diphosphate. It participates in porphyrin-containing compound metabolism; heme O biosynthesis; heme O from protoheme: step 1/1. Its function is as follows. Converts heme B (protoheme IX) to heme O by substitution of the vinyl group on carbon 2 of heme B porphyrin ring with a hydroxyethyl farnesyl side group. This Brucella canis (strain ATCC 23365 / NCTC 10854 / RM-666) protein is Protoheme IX farnesyltransferase.